The primary structure comprises 605 residues: Dihydrogeodin oxidase (605 aa).

Residues 1 to 18 (MPSLKDWVVAGLVPMTIA) form the signal peptide. Residues asparagine 27, asparagine 107, and asparagine 112 are each glycosylated (N-linked (GlcNAc...) asparagine). Plastocyanin-like domains lie at 65–183 (TVTQ…GPSS), 189–347 (DLGP…YDES), and 424–567 (YVDW…KIKP). The Cu cation site is built by histidine 117, histidine 119, histidine 161, and histidine 163. Residues asparagine 278 and asparagine 467 are each glycosylated (N-linked (GlcNAc...) asparagine). The Cu cation site is built by histidine 484, histidine 487, histidine 489, histidine 543, cysteine 544, histidine 545, and histidine 549.

It belongs to the multicopper oxidase family. Requires Cu cation as cofactor.

The enzyme catalyses 2 dihydrogeodin + O2 + 2 H(+) = 2 (+)-geodin + 2 H2O. The protein operates within secondary metabolite biosynthesis. Functionally, dihydrogeodin oxidase; part of the gene cluster that mediates the biosynthesis of geodin, an intermediate in the biosynthesis of other natural products. The pathway begins with the synthesis of atrochrysone thioester by the polyketide synthase (PKS) gedC. The atrochrysone carboxyl ACP thioesterase gedB then breaks the thioester bond and releases the atrochrysone carboxylic acid from gedC. The atrochrysone carboxylic acid is then converted to atrochrysone which is further transformed into emodinanthrone. The next step is performed by the emodinanthrone oxygenase gedH that catalyzes the oxidation of emodinanthrone to emodin. Emodin O-methyltransferase encoded probably by gedA then catalyzes methylation of the 8-hydroxy group of emodin to form questin. Ring cleavage of questin by questin oxidase gedK leads to desmethylsulochrin via several intermediates including questin epoxide. Another methylation step probably catalyzed by methyltransferase gedG leads to the formation of sulochrin which is further converted to dihydrogeodin by the sulochrin halogenase gedL. Finally, the dihydrogeodin oxidase gedJ catalyzes the stereospecific phenol oxidative coupling reaction converting dihydrogeodin to geodin. The protein is Dihydrogeodin oxidase of Aspergillus terreus (strain NIH 2624 / FGSC A1156).